A 303-amino-acid polypeptide reads, in one-letter code: Coenzyme PQQ synthesis protein B (303 aa).

The protein belongs to the PqqB family.

Its pathway is cofactor biosynthesis; pyrroloquinoline quinone biosynthesis. May be involved in the transport of PQQ or its precursor to the periplasm. The polypeptide is Coenzyme PQQ synthesis protein B (Acinetobacter baumannii (strain ACICU)).